The following is a 277-amino-acid chain: MAIKKYKPTSNGRRGMTTSDFAEITTDQPEKSLLAPLHKKGGRNNQGKLTVRHQGGGHKRQYRVIDFKRDKDGIPGRVATVEYDPNRSANIALINYVDGEKRYILAPKGIQVGTEIMSGPEADIKVGNALPLINIPVGTVVHNIELKPGKGGQLVRSAGTSAQVLGKEGKYVLVRLNSGEVRMILSACRASIGQVGNEQHELINVGKAGRSRWKGIRPTVRGSVMNPNDHPHGGGEGRAPIGRKSPMSPWGKPTLGFKTRKKKNKSDKFIVRRRKNK.

Disordered stretches follow at residues 36 to 58 and 219 to 277; these read PLHK…GGGH and TVRG…RKNK. Positions 258–277 are enriched in basic residues; sequence KTRKKKNKSDKFIVRRRKNK.

Belongs to the universal ribosomal protein uL2 family. As to quaternary structure, part of the 50S ribosomal subunit. Forms a bridge to the 30S subunit in the 70S ribosome.

Functionally, one of the primary rRNA binding proteins. Required for association of the 30S and 50S subunits to form the 70S ribosome, for tRNA binding and peptide bond formation. It has been suggested to have peptidyltransferase activity; this is somewhat controversial. Makes several contacts with the 16S rRNA in the 70S ribosome. This chain is Large ribosomal subunit protein uL2, found in Bacillus velezensis (strain DSM 23117 / BGSC 10A6 / LMG 26770 / FZB42) (Bacillus amyloliquefaciens subsp. plantarum).